A 25-amino-acid polypeptide reads, in one-letter code: Alpha-lytic protease (25 aa).

It belongs to the peptidase S1 family.

It catalyses the reaction Preferential cleavage: Ala-|-Xaa, Val-|-Xaa in bacterial cell walls, elastin and other proteins.. This Achromobacter lyticus protein is Alpha-lytic protease.